We begin with the raw amino-acid sequence, 362 residues long: 45 kDa calcium-binding protein (362 aa).

Positions 1-36 (MVWPWVAMASRWGPLIGLAPCCLWLLGAVLLMDASA) are cleaved as a signal peptide. N-linked (GlcNAc...) asparagine glycosylation is present at Asn-40. 2 EF-hand domains span residues 98-133 (RSRR…KTAE) and 137-172 (EAME…SKGH). Ser-99 carries the phosphoserine modification. Ca(2+) contacts are provided by Asp-111, Asn-113, Asp-115, Lys-117, Glu-122, Asp-150, Asp-152, Asp-154, His-156, and Glu-161. At Thr-193 the chain carries Phosphothreonine. 4 consecutive EF-hand domains span residues 197 to 232 (LENL…HSRG), 233 to 268 (MLRF…TVEN), 278 to 313 (WVKD…MNEY), and 314 to 349 (NALN…FTGS). Asp-213 serves as a coordination point for Ca(2+). Thr-217 is modified (phosphothreonine). 6 residues coordinate Ca(2+): Glu-220, Asp-246, Asp-248, Asp-250, Gln-252, and Glu-257. Thr-265 carries the post-translational modification Phosphothreonine. Residues Asp-291, Asn-293, and Asp-295 each coordinate Ca(2+). The residue at position 299 (Thr-299) is a Phosphothreonine. Residues Glu-302, Asp-327, Asn-329, Asn-331, His-333, and Glu-338 each coordinate Ca(2+). The segment at 309–362 (PMNEYNALNEAKQMIAVADENQNHHLEPEEVLKYSEFFTGSKLVDYARSVHEEF) is necessary for intracellular retention in Golgi apparatus lumen.

It belongs to the CREC family. In terms of assembly, isoform 5 interacts with STXBP1; the interaction is enhanced in presence of calcium. Isoform 5 interacts with STX3. Ubiquitous. Isoform 5 is expressed in pancreas.

Its subcellular location is the golgi apparatus lumen. It localises to the cytoplasm. The protein resides in the cell membrane. The protein localises to the cell projection. It is found in the bleb. Its function is as follows. May regulate calcium-dependent activities in the endoplasmic reticulum lumen or post-ER compartment. Isoform 5 may be involved in the exocytosis of zymogens by pancreatic acini. In Homo sapiens (Human), this protein is 45 kDa calcium-binding protein (SDF4).